Consider the following 406-residue polypeptide: uncharacterized protein (406 aa).

Belongs to the glycosyltransferase group 1 family. Glycosyltransferase 4 subfamily.

This is an uncharacterized protein from Methanocaldococcus jannaschii (strain ATCC 43067 / DSM 2661 / JAL-1 / JCM 10045 / NBRC 100440) (Methanococcus jannaschii).